We begin with the raw amino-acid sequence, 197 residues long: uncharacterized protein (197 aa).

The next 4 membrane-spanning stretches (helical) occupy residues 30-50 (WVAMGATAITVLAGAHIVEMA), 61-81 (LVAGASVVFWAFGPWLIPPLV), 101-121 (LWSVVFPLGMYGVGAYRLGLA), and 130-150 (IGEFEGWVALAVWTITFVAML).

It localises to the cell membrane. This is an uncharacterized protein from Mycobacterium tuberculosis (strain CDC 1551 / Oshkosh).